The sequence spans 145 residues: S-adenosylmethionine synthase 2 (145 aa).

ATP-binding positions include 6 to 7 (RK), A23, K27, and K31. Position 31 (K31) interacts with L-methionine.

This sequence belongs to the AdoMet synthase family. Homotetramer. Mn(2+) serves as cofactor. It depends on Mg(2+) as a cofactor. The cofactor is Co(2+). K(+) is required as a cofactor. As to expression, mainly in floral buds and roots.

The protein localises to the cytoplasm. It carries out the reaction L-methionine + ATP + H2O = S-adenosyl-L-methionine + phosphate + diphosphate. The protein operates within amino-acid biosynthesis; S-adenosyl-L-methionine biosynthesis; S-adenosyl-L-methionine from L-methionine: step 1/1. Catalyzes the formation of S-adenosylmethionine from methionine and ATP. The reaction comprises two steps that are both catalyzed by the same enzyme: formation of S-adenosylmethionine (AdoMet) and triphosphate, and subsequent hydrolysis of the triphosphate. This chain is S-adenosylmethionine synthase 2 (SMS-2), found in Petroselinum crispum (Parsley).